The sequence spans 117 residues: Large ribosomal subunit protein uL18 (117 aa).

Belongs to the universal ribosomal protein uL18 family. Part of the 50S ribosomal subunit; part of the 5S rRNA/L5/L18/L25 subcomplex. Contacts the 5S and 23S rRNAs.

Its function is as follows. This is one of the proteins that bind and probably mediate the attachment of the 5S RNA into the large ribosomal subunit, where it forms part of the central protuberance. The polypeptide is Large ribosomal subunit protein uL18 (Klebsiella pneumoniae (strain 342)).